The following is a 71-amino-acid chain: uncharacterized protein (71 aa).

The tract at residues 52-71 (KEKFERKEDEKSKPKGVRED) is disordered.

This is an uncharacterized protein from Archaeoglobus fulgidus (strain ATCC 49558 / DSM 4304 / JCM 9628 / NBRC 100126 / VC-16).